Reading from the N-terminus, the 183-residue chain is Dual-action ribosomal maturation protein DarP (183 aa).

A disordered region spans residues 1–27 (MSSHSQEPVGEENFDDSEYDRPSKSQV). A compositionally biased stretch (acidic residues) spans 9–18 (VGEENFDDSE).

The protein belongs to the DarP family.

It localises to the cytoplasm. Member of a network of 50S ribosomal subunit biogenesis factors which assembles along the 30S-50S interface, preventing incorrect 23S rRNA structures from forming. Promotes peptidyl transferase center (PTC) maturation. The chain is Dual-action ribosomal maturation protein DarP from Bordetella parapertussis (strain 12822 / ATCC BAA-587 / NCTC 13253).